Reading from the N-terminus, the 347-residue chain is Phosphoribosylformylglycinamidine cyclo-ligase (347 aa).

This sequence belongs to the AIR synthase family.

Its subcellular location is the cytoplasm. The enzyme catalyses 2-formamido-N(1)-(5-O-phospho-beta-D-ribosyl)acetamidine + ATP = 5-amino-1-(5-phospho-beta-D-ribosyl)imidazole + ADP + phosphate + H(+). The protein operates within purine metabolism; IMP biosynthesis via de novo pathway; 5-amino-1-(5-phospho-D-ribosyl)imidazole from N(2)-formyl-N(1)-(5-phospho-D-ribosyl)glycinamide: step 2/2. This chain is Phosphoribosylformylglycinamidine cyclo-ligase, found in Prochlorococcus marinus (strain AS9601).